Here is a 77-residue protein sequence, read N- to C-terminus: Anionic peptide 17.1 (77 aa).

The signal sequence occupies residues 1-24; the sequence is MASKTVLVLLLVSVLVSTFCTAKA.

It belongs to the non-disulfide-bridged peptide (NDBP) superfamily. Long chain multifunctional peptide (group 2) family. As to expression, expressed by the venom gland.

It localises to the secreted. This is Anionic peptide 17.1 from Lychas mucronatus (Chinese swimming scorpion).